A 236-amino-acid chain; its full sequence is Phospholipid hydroperoxide glutathione peroxidase 1, chloroplastic (236 aa).

The segment covering 1–16 (MVSMTTSSSSYGTFST) has biased composition (low complexity). Residues 1-24 (MVSMTTSSSSYGTFSTVVNSSRPN) are disordered. A chloroplast-targeting transit peptide spans 1 to 64 (MVSMTTSSSS…PINPGFLFKS (64 aa)). Cys-111 is an active-site residue.

The protein belongs to the glutathione peroxidase family. Expressed in leaves, stems, flowers, green siliques and seeds.

The protein resides in the plastid. The protein localises to the chloroplast. The enzyme catalyses a hydroperoxy polyunsaturated fatty acid + 2 glutathione = a hydroxy polyunsaturated fatty acid + glutathione disulfide + H2O. Its function is as follows. Protects cells and enzymes from oxidative damage, by catalyzing the reduction of hydrogen peroxide, lipid peroxides and organic hydroperoxide, by glutathione. In Arabidopsis thaliana (Mouse-ear cress), this protein is Phospholipid hydroperoxide glutathione peroxidase 1, chloroplastic (GPX1).